The chain runs to 449 residues: Glucose-6-phosphate isomerase (449 aa).

The active-site Proton donor is the Glu291. Active-site residues include His312 and Lys426.

The protein belongs to the GPI family.

The protein localises to the cytoplasm. The enzyme catalyses alpha-D-glucose 6-phosphate = beta-D-fructose 6-phosphate. It participates in carbohydrate biosynthesis; gluconeogenesis. The protein operates within carbohydrate degradation; glycolysis; D-glyceraldehyde 3-phosphate and glycerone phosphate from D-glucose: step 2/4. Functionally, catalyzes the reversible isomerization of glucose-6-phosphate to fructose-6-phosphate. In Streptococcus pyogenes serotype M5 (strain Manfredo), this protein is Glucose-6-phosphate isomerase.